The sequence spans 284 residues: Xyloglucan endotransglucosylase/hydrolase protein 22 (284 aa).

An N-terminal signal peptide occupies residues 1–21; the sequence is MAITYLLPLFLSLIITSSVSA. Residues 22 to 211 form the GH16 domain; that stretch reads NFQRDVEITW…WSKAPFTASY (190 aa). The active-site Nucleophile is glutamate 97. The active-site Proton donor is the glutamate 101. Residue glutamate 101 participates in xyloglucan binding. Asparagine 105 carries N-linked (GlcNAc...) asparagine glycosylation. Residues 114-116, 124-126, 190-191, and glycine 195 each bind xyloglucan; these read HTN, DKE, and DW. Cysteine 219 and cysteine 228 are joined by a disulfide. A glycan (N-linked (GlcNAc...) asparagine) is linked at asparagine 230. A disulfide bridge connects residues cysteine 267 and cysteine 281. Arginine 272 serves as a coordination point for xyloglucan.

Belongs to the glycosyl hydrolase 16 family. XTH group 2 subfamily. Post-translationally, contains at least one intrachain disulfide bond essential for its enzymatic activity. In terms of processing, N-glycosylated; essential for its enzymatic activity. In terms of tissue distribution, highly expressed. Predominantly expressed in green siliques. Expressed in young expanding leaves, trichomes, lateral root primordia, vascular tissue, abscission zones and elongating hypocols. Following wind stimulation, it decreases in the leaves of wind-stimulated plants, while it strongly increases in sites around cells of the pith parenchyma, between the vascular elements, and within the epidermis.

It localises to the secreted. Its subcellular location is the cell wall. It is found in the extracellular space. The protein localises to the apoplast. It catalyses the reaction breaks a beta-(1-&gt;4) bond in the backbone of a xyloglucan and transfers the xyloglucanyl segment on to O-4 of the non-reducing terminal glucose residue of an acceptor, which can be a xyloglucan or an oligosaccharide of xyloglucan.. Catalyzes xyloglucan endohydrolysis (XEH) and/or endotransglycosylation (XET). Cleaves and religates xyloglucan polymers, an essential constituent of the primary cell wall, and thereby participates in cell wall construction of growing tissues. Its induction in case of mechanical stress, suggests that it may contribute in the adaptive changes in morphogenesis by being recruited to alter tissues tensil strength, or flexibility, enabling adaptation to mechanically stressful environments. The sequence is that of Xyloglucan endotransglucosylase/hydrolase protein 22 (XTH22) from Arabidopsis thaliana (Mouse-ear cress).